The following is a 970-amino-acid chain: Vacuolar membrane protease (970 aa).

Over residues 1 to 12 (MTTADSNSSATR) the composition is skewed to polar residues. The tract at residues 1–35 (MTTADSNSSATRGSHEMADGSNRVPNDEPYHRKSP) is disordered. The Cytoplasmic portion of the chain corresponds to 1-56 (MTTADSNSSATRGSHEMADGSNRVPNDEPYHRKSPESCENANFFVRAMRASFGYRK). Residues 25 to 35 (PNDEPYHRKSP) are compositionally biased toward basic and acidic residues. Residues 57–77 (TSLTILVFLSVIATVLLSYYD) form a helical membrane-spanning segment. Residues 78 to 397 (SSLEFSVSLP…FVVPMTFVFG (320 aa)) are Vacuolar-facing. Asparagine 146 and asparagine 173 each carry an N-linked (GlcNAc...) asparagine glycan. Zn(2+) is bound by residues histidine 187 and aspartate 199. Residue glutamate 234 is the Proton acceptor of the active site. Residues glutamate 235, glutamate 260, and histidine 333 each contribute to the Zn(2+) site. Residues 398–418 (VNVLLMVLVPLVSLISLALIF) traverse the membrane as a helical segment. The Cytoplasmic portion of the chain corresponds to 419–423 (AHRKW). The helical transmembrane segment at 424 to 444 (SVSLVTFFKFPLSFILSIFLL) threads the bilayer. Residues 445 to 465 (DNFSSWFVVSVNNFLPNSSAG) lie on the Vacuolar side of the membrane. N-linked (GlcNAc...) asparagine glycans are attached at residues asparagine 446 and asparagine 461. The chain crosses the membrane as a helical span at residues 466–486 (IIALTYFSFFVLANYLLLNGI). Over 487–502 (NLLFWKFKGTRHDEKL) the chain is Cytoplasmic. The helical transmembrane segment at 503–523 (VVILQISFMFWVSLIWSTANI) threads the bilayer. The Vacuolar segment spans residues 524-535 (AKSQFNGEHSGE). The chain crosses the membrane as a helical span at residues 536-556 (FLLTLLYILQAAGGVFGLLCW). Topologically, residues 557–620 (LFKRSRTVHT…PTKHYSYDWS (64 aa)) are cytoplasmic. Residues 621–641 (IQFLFIVPISSFLSYNYGWLI) traverse the membrane as a helical segment. Topologically, residues 642 to 658 (LEGLKKTLQESATSEYL) are vacuolar. The helical transmembrane segment at 659 to 679 (VFRALKLLAVVVAVPYLPFIF) threads the bilayer. The Cytoplasmic segment spans residues 680–683 (KVNR). Residues 684–704 (IVFLVTIFLFVYGLGAIVISE) traverse the membrane as a helical segment. The Vacuolar portion of the chain corresponds to 705-970 (PFTEANPLKL…LVNVKKSVLV (266 aa)). Residues asparagine 738, asparagine 797, and asparagine 877 are each glycosylated (N-linked (GlcNAc...) asparagine).

Belongs to the peptidase M28 family. Zn(2+) serves as cofactor.

Its subcellular location is the vacuole membrane. In terms of biological role, may be involved in vacuolar sorting and osmoregulation. The sequence is that of Vacuolar membrane protease from Meyerozyma guilliermondii (strain ATCC 6260 / CBS 566 / DSM 6381 / JCM 1539 / NBRC 10279 / NRRL Y-324) (Yeast).